The primary structure comprises 413 residues: Alpha-1-antitrypsin-like protein CM55-MS (413 aa).

Residues 1–24 (MPSSISWGLLLLAALSCLGPGSLA) form the signal peptide. Gln-25 is modified (pyrrolidone carboxylic acid). Asn-65, Asn-102, Asn-165, and Asn-266 each carry an N-linked (GlcNAc...) asparagine glycan. The interval 368–387 (GATVGGITFMSRPKEVIFDR) is RCL.

This sequence belongs to the serpin family. In terms of tissue distribution, expressed in liver.

The protein localises to the secreted. In terms of biological role, serine protease inhibitor. The polypeptide is Alpha-1-antitrypsin-like protein CM55-MS (Tamias sibiricus (Siberian chipmunk)).